The chain runs to 71 residues: Disintegrin simusmin (71 aa).

A Disintegrin domain is found at 1 to 71 (AGEECDCGSP…SADCPRNPFH (71 aa)). Disulfide bonds link Cys5-Cys20, Cys7-Cys15, Cys14-Cys37, Cys28-Cys34, Cys33-Cys58, and Cys46-Cys65. The Cell attachment site motif lies at 50–52 (RGD).

The protein belongs to the venom metalloproteinase (M12B) family. P-II subfamily. P-IIa sub-subfamily. Monomer. Expressed by the venom gland.

It localises to the secreted. Inhibits ADP- (IC(50)=56 nM) and collagen-induced (IC(50)=49 nM) aggregation of human platelets. In vitro, inhibits adhesion of endothelial cells to vitronectin, type-I collagen and, to a lower degree, fibronectin and laminin. The chain is Disintegrin simusmin from Crotalus simus (Central American rattlesnake).